The chain runs to 398 residues: Beta-1,6-galactosyltransferase GALT29A (398 aa).

Residues 1 to 6 are Cytoplasmic-facing; it reads MKRSVR. Residues 7–27 traverse the membrane as a helical; Signal-anchor for type II membrane protein segment; it reads PLFSALLFAFFAATLICRVAI. The Lumenal segment spans residues 28 to 398; it reads RRSSFSFASA…FKIPLVQVYH (371 aa). Asn221 and Asn346 each carry an N-linked (GlcNAc...) asparagine glycan.

It belongs to the glycosyltransferase 29 family. As to quaternary structure, interacts with GALT31A.

The protein localises to the golgi apparatus membrane. Its function is as follows. Galactosyltransferase involved in the biosynthesis of type II arabinogalactan. Possesses galactosyltransferase (GalT) activity in vitro, transferring galactose from UDP-galactose to a mixture of various oligosaccharides derived from arabinogalactan proteins. Forms a complex with GALT31A that can work cooperatively to enhance the activities of adding galactose residues at O6 positions to beta-1,6-galactan and beta-1,3-galactan. This is Beta-1,6-galactosyltransferase GALT29A from Arabidopsis thaliana (Mouse-ear cress).